The primary structure comprises 218 residues: UPF0502 protein Mmwyl1_3509 (218 aa).

This sequence belongs to the UPF0502 family.

The chain is UPF0502 protein Mmwyl1_3509 from Marinomonas sp. (strain MWYL1).